Here is a 171-residue protein sequence, read N- to C-terminus: SPbeta prophage-derived uncharacterized protein YokC (171 aa).

This is SPbeta prophage-derived uncharacterized protein YokC (yokC) from Bacillus subtilis (strain 168).